The sequence spans 373 residues: Putative glutamate--cysteine ligase 2 (373 aa).

It belongs to the glutamate--cysteine ligase type 2 family. YbdK subfamily. As to quaternary structure, homodimer.

The catalysed reaction is L-cysteine + L-glutamate + ATP = gamma-L-glutamyl-L-cysteine + ADP + phosphate + H(+). Functionally, ATP-dependent carboxylate-amine ligase which exhibits weak glutamate--cysteine ligase activity. In Enterobacter sp. (strain 638), this protein is Putative glutamate--cysteine ligase 2.